Reading from the N-terminus, the 59-residue chain is Large ribosomal subunit protein bL32 (59 aa).

The tract at residues 1–20 is disordered; the sequence is MAVPRNRHSNARKNIRRSHH.

This sequence belongs to the bacterial ribosomal protein bL32 family.

This Chlamydia muridarum (strain MoPn / Nigg) protein is Large ribosomal subunit protein bL32 (rpmF).